The primary structure comprises 266 residues: Glioma pathogenesis-related protein 1 (266 aa).

The first 21 residues, 1-21 (MRVTLATIAWMVSFVSNYSHT), serve as a signal peptide directing secretion. Residues 38-175 (VRIHNKFRSE…SNGAHFICNY (138 aa)) enclose the SCP domain. A helical membrane pass occupies residues 233-255 (YTSLFLIVNSVILILSVIITILV).

It belongs to the CRISP family. As to expression, according to PubMed:8973356, it is ubiquitously expressed with high levels in lung and kidney and low levels in heart and liver. Highly expressed in cell lines derived from nervous system tumors arising from glia, low or absent in non-glial-derived nervous system tumor cell lines. Also found in fetal kidney. According to PubMed:7607567 it is expressed only in brain tumor glioblastoma multiforme/astrocytoma and not in other nervous system tumors or normal fetal or adult tissues.

It is found in the membrane. The protein is Glioma pathogenesis-related protein 1 (GLIPR1) of Homo sapiens (Human).